The primary structure comprises 401 residues: Glutamyl-tRNA reductase (401 aa).

Residues 45-48 (TCNR), Ser101, 106-108 (EDQ), and Gln112 contribute to the substrate site. Residue Cys46 is the Nucleophile of the active site. 177-182 (GYGDVG) provides a ligand contact to NADP(+).

The protein belongs to the glutamyl-tRNA reductase family. In terms of assembly, homodimer.

The catalysed reaction is (S)-4-amino-5-oxopentanoate + tRNA(Glu) + NADP(+) = L-glutamyl-tRNA(Glu) + NADPH + H(+). It participates in porphyrin-containing compound metabolism; protoporphyrin-IX biosynthesis; 5-aminolevulinate from L-glutamyl-tRNA(Glu): step 1/2. Its function is as follows. Catalyzes the NADPH-dependent reduction of glutamyl-tRNA(Glu) to glutamate 1-semialdehyde (GSA). This Clostridium botulinum (strain Alaska E43 / Type E3) protein is Glutamyl-tRNA reductase.